We begin with the raw amino-acid sequence, 470 residues long: 6-phosphofructo-2-kinase/fructose-2,6-bisphosphatase (470 aa).

Residues 1–249 are 6-phosphofructo-2-kinase; that stretch reads MADRLRELTQ…VYYLMNIHVT (249 aa). Residue serine 31 is modified to Phosphoserine; by PKA. Position 47–55 (47–55) interacts with ATP; sequence GLPARGKTY. The beta-D-fructose 6-phosphate site is built by arginine 80 and arginine 104. Aspartate 130 is an active-site residue. 2 residues coordinate beta-D-fructose 6-phosphate: threonine 132 and arginine 138. The active site involves cysteine 160. 169-174 is an ATP binding site; that stretch reads NITQVK. Residues lysine 174, arginine 195, and tyrosine 199 each contribute to the beta-D-fructose 6-phosphate site. Positions 250–470 are fructose-2,6-bisphosphatase; the sequence is PRSIYLSRHG…EALDTVPEHF (221 aa). Arginine 257 serves as a coordination point for beta-D-fructose 2,6-bisphosphate. The active-site Tele-phosphohistidine intermediate is the histidine 258. Beta-D-fructose 2,6-bisphosphate is bound by residues asparagine 264 and glycine 270. Glutamate 327 serves as the catalytic Proton donor/acceptor. Residues tyrosine 338, arginine 352, lysine 356, tyrosine 367, glutamine 393, and arginine 397 each coordinate beta-D-fructose 2,6-bisphosphate. 349 to 352 serves as a coordination point for ATP; sequence FALR. ATP is bound by residues 393 to 397 and tyrosine 429; that span reads QAVMR.

It in the C-terminal section; belongs to the phosphoglycerate mutase family. In terms of assembly, homodimer.

The catalysed reaction is beta-D-fructose 2,6-bisphosphate + H2O = beta-D-fructose 6-phosphate + phosphate. It carries out the reaction beta-D-fructose 6-phosphate + ATP = beta-D-fructose 2,6-bisphosphate + ADP + H(+). With respect to regulation, phosphorylation results in inhibition of the kinase activity. Functionally, synthesis and degradation of fructose 2,6-bisphosphate. This chain is 6-phosphofructo-2-kinase/fructose-2,6-bisphosphatase, found in Aquarana catesbeiana (American bullfrog).